The sequence spans 1076 residues: MKCYNPSAFVPMAVTLVTVVIYLGVFIPLLIIHETVPSAPDDPTLYNGLNLTEAWLDLQSLSDGYHPFNSRKNDDVRNWLLKRIDEILDHNQIQYTTENETADTSDVQLESDFDKDVPESMSGPNNFNDDSVEYHEDLRTRKVSPAVTVFNDLRSNYSSNALTSIGVKGRRLGISTYFEGNNIICYVRGNDDEEGEWWKTGSVNSKGKMHGRGGVMVNAHFDSVSTGFGATDDGVGVVTALQLIRYFTTPENRPQKGFVALFNNGEEDGLYGAKAFLSHPMAKFVHTFLNLEGAGAGGRATLFRSTDTEVTRAYAHAKHPFGTVVSSDGFSSGFVRSETDYVVFRAEGYRGLDVAFWQPRSQYHTDQDDAKHTSIDSLWHMLSASVATTRSLTRDTSNTFVGPRSDDKIGKVSNGKGSDGVWFDIFGTVFAVFRLRTLFAWSLTLLIASPLILFAVSYLLNRQEKFYFFAGSIKSKNPEDEPISLGGWRGAFRFPITLFITSAITFACASLINKINPMIIYSSPYAVWSMSATLFFSVFWFIMAGCNFVRPSALQRGYAFMWMFVFGWILLVVATVYEDRFKISGGYLFVFYEAAIFLATLIAICEQFALPRKSTYIEDSQNDHSDNQDHHHQAVMGTDGANGADEPNADDEAAEEDQEETVNATAFPHETTPLIGGGQPSHRASVSTSFANRYRQVVPESYDGPADHDDKKGHKKHPYGGEQEWSAKLPIWTWLVQYLLVGPFILVILGQVGLFLVAALHQTGTDGSPLFLPYLIVAIFSILLLLPVTPFIHRLTHHMPTFFFLVFIGTLIYNLVAFPFSPNNRYKAYFQQTVDLDTGVNRVTLVGIEQYIRNIITNIPSAAGQSINCEANPRIRSGLSFCSYEGIPPQVVDNVVEGVPPEKGYSDWLSFNVSRVPNENKATFHISGVETRACILRFDDPFSEFKVHGGAKSEERWDDVPDSGSDQIKLWHRDWNKEWVVDVEWAVGEDMKPGDEGRSGRVVCLWSDANKRGVIPALDEAQRFSPQWTSVVKLMDGLVEGSKRRVGELVRVGGWKKGRRDDFSLALGLAFLLAYV.

Over 1–11 (MKCYNPSAFVP) the chain is Cytoplasmic. A helical transmembrane segment spans residues 12-32 (MAVTLVTVVIYLGVFIPLLII). Residues 33-437 (HETVPSAPDD…TVFAVFRLRT (405 aa)) are Vacuolar-facing. 3 N-linked (GlcNAc...) asparagine glycosylation sites follow: asparagine 50, asparagine 99, and asparagine 156. The Zn(2+) site is built by histidine 220 and aspartate 232. Glutamate 266 functions as the Proton acceptor in the catalytic mechanism. Zn(2+) contacts are provided by glutamate 267, glutamate 292, and histidine 364. A helical transmembrane segment spans residues 438–458 (LFAWSLTLLIASPLILFAVSY). The Cytoplasmic segment spans residues 459–491 (LLNRQEKFYFFAGSIKSKNPEDEPISLGGWRGA). A helical transmembrane segment spans residues 492–512 (FRFPITLFITSAITFACASLI). The Vacuolar portion of the chain corresponds to 513 to 525 (NKINPMIIYSSPY). The helical transmembrane segment at 526 to 546 (AVWSMSATLFFSVFWFIMAGC) threads the bilayer. Over 547–556 (NFVRPSALQR) the chain is Cytoplasmic. The helical transmembrane segment at 557–577 (GYAFMWMFVFGWILLVVATVY) threads the bilayer. Residues 578–584 (EDRFKIS) are Vacuolar-facing. A helical transmembrane segment spans residues 585–605 (GGYLFVFYEAAIFLATLIAIC). The Cytoplasmic portion of the chain corresponds to 606 to 738 (EQFALPRKST…LPIWTWLVQY (133 aa)). Disordered regions lie at residues 619 to 662 (DSQN…EETV) and 701 to 720 (SYDGPADHDDKKGHKKHPYG). Residues 621–632 (QNDHSDNQDHHH) show a composition bias toward basic and acidic residues. Residues 647-660 (PNADDEAAEEDQEE) are compositionally biased toward acidic residues. The chain crosses the membrane as a helical span at residues 739–759 (LLVGPFILVILGQVGLFLVAA). Residues 760–771 (LHQTGTDGSPLF) are Vacuolar-facing. The chain crosses the membrane as a helical span at residues 772–792 (LPYLIVAIFSILLLLPVTPFI). Residues 793 to 799 (HRLTHHM) are Cytoplasmic-facing. The helical transmembrane segment at 800–820 (PTFFFLVFIGTLIYNLVAFPF) threads the bilayer. Topologically, residues 821–1076 (SPNNRYKAYF…LGLAFLLAYV (256 aa)) are vacuolar. Asparagine 912 carries an N-linked (GlcNAc...) asparagine glycan.

This sequence belongs to the peptidase M28 family. Zn(2+) is required as a cofactor.

It is found in the vacuole membrane. Functionally, may be involved in vacuolar sorting and osmoregulation. This chain is Vacuolar membrane protease, found in Sclerotinia sclerotiorum (strain ATCC 18683 / 1980 / Ss-1) (White mold).